We begin with the raw amino-acid sequence, 100 residues long: Small ribosomal subunit protein uS14c (100 aa).

The protein belongs to the universal ribosomal protein uS14 family. Part of the 30S ribosomal subunit.

It is found in the plastid. The protein resides in the chloroplast. Binds 16S rRNA, required for the assembly of 30S particles. The protein is Small ribosomal subunit protein uS14c of Nymphaea alba (White water-lily).